Reading from the N-terminus, the 67-residue chain is SPbeta prophage-derived uncharacterized protein YopZ (67 aa).

Residues 1–40 (MTSEMQLQAQIDVIEKENKELRRRNEELGQTVECQNKQIV) adopt a coiled-coil conformation. Residues 44 to 66 (WRLLFFASSWIVYGIVSAIKYLW) form a helical membrane-spanning segment.

It is found in the cell membrane. The polypeptide is SPbeta prophage-derived uncharacterized protein YopZ (yopZ) (Bacillus subtilis (strain 168)).